The chain runs to 1031 residues: Ookinete maturation protein 1 (1031 aa).

Disordered stretches follow at residues 125-184 (HNEN…PELE), 340-405 (KEAE…DGMR), and 609-697 (DAEL…NDSI). Residues 141–168 (QKLKKKKKIKKGTKKKSINKISILKHKS) are compositionally biased toward basic residues. Polar residues predominate over residues 171 to 180 (SFPSTQNENT). Residues 340 to 357 (KEAEEEERKKNEDEHILE) show a composition bias toward basic and acidic residues. Polar residues predominate over residues 377–394 (LGKSFKNNESFELNSPQK). Positions 581–646 (IDEENSVFVE…ETQMAGKEEK (66 aa)) form a coiled coil. A compositionally biased stretch (basic and acidic residues) spans 610-648 (AELRKDEEEDKSKNNEKDSKSEERDILETQMAGKEEKPV). Residues 649-659 (LKKKKKNKGKQ) show a composition bias toward basic residues. Positions 660-686 (RNREGKGVVEKGYDAKREKKENEEKNK) are enriched in basic and acidic residues.

Its function is as follows. In the mosquito vector midgut, plays a role in ookinete development. The chain is Ookinete maturation protein 1 from Plasmodium berghei (strain Anka).